A 728-amino-acid chain; its full sequence is Catalase-peroxidase (728 aa).

The tryptophyl-tyrosyl-methioninium (Trp-Tyr) (with M-244) cross-link spans 91–218 (WHSAGTYRTA…LAAVQMGLIY (128 aa)). His-92 serves as the catalytic Proton acceptor. Positions 218-244 (YVNPEGPDGTPDPVAAAHDIRETFARM) form a cross-link, tryptophyl-tyrosyl-methioninium (Tyr-Met) (with W-91). A heme b-binding site is contributed by His-259.

Belongs to the peroxidase family. Peroxidase/catalase subfamily. As to quaternary structure, homodimer or homotetramer. The cofactor is heme b. Post-translationally, formation of the three residue Trp-Tyr-Met cross-link is important for the catalase, but not the peroxidase activity of the enzyme.

It carries out the reaction H2O2 + AH2 = A + 2 H2O. The catalysed reaction is 2 H2O2 = O2 + 2 H2O. Bifunctional enzyme with both catalase and broad-spectrum peroxidase activity. The sequence is that of Catalase-peroxidase from Burkholderia lata (strain ATCC 17760 / DSM 23089 / LMG 22485 / NCIMB 9086 / R18194 / 383).